A 441-amino-acid chain; its full sequence is Serine--tRNA ligase (441 aa).

250–252 (TSE) provides a ligand contact to L-serine. ATP-binding positions include 281–283 (RRE) and Val297. Glu304 is an L-serine binding site. 368–371 (EIVS) serves as a coordination point for ATP. Thr402 contacts L-serine.

The protein belongs to the class-II aminoacyl-tRNA synthetase family. Type-1 seryl-tRNA synthetase subfamily. In terms of assembly, homodimer. The tRNA molecule binds across the dimer.

Its subcellular location is the cytoplasm. The catalysed reaction is tRNA(Ser) + L-serine + ATP = L-seryl-tRNA(Ser) + AMP + diphosphate + H(+). The enzyme catalyses tRNA(Sec) + L-serine + ATP = L-seryl-tRNA(Sec) + AMP + diphosphate + H(+). It functions in the pathway aminoacyl-tRNA biosynthesis; selenocysteinyl-tRNA(Sec) biosynthesis; L-seryl-tRNA(Sec) from L-serine and tRNA(Sec): step 1/1. Functionally, catalyzes the attachment of serine to tRNA(Ser). Is also able to aminoacylate tRNA(Sec) with serine, to form the misacylated tRNA L-seryl-tRNA(Sec), which will be further converted into selenocysteinyl-tRNA(Sec). This is Serine--tRNA ligase from Thermoplasma volcanium (strain ATCC 51530 / DSM 4299 / JCM 9571 / NBRC 15438 / GSS1).